Reading from the N-terminus, the 288-residue chain is Baseplate protein gp9 (288 aa).

Residues 20–80 are a coiled coil; sequence TGDILFDGGN…SITEYATPVK (61 aa).

As to quaternary structure, homotrimer. The gp9 trimer interacts with the long tail fiber (LTF) that comprises gp34 trimer, gp35, gp36 and a gp37 trimer. Part of the baseplate macromolecular complex which consists of gp5, gp5.4, gp27 (central spike complex); gp6, gp25, gp53 (inner baseplate); gp7, gp8 (intermediate baseplate); gp9, gp10, gp11, gp12 (peripheral); gp48 and gp54 (proximal region of the tail tube).

It is found in the virion. In terms of biological role, peripheral baseplate protein that is part of the tail fiber network. Connects the long tail fibers to the baseplate and, after virus attachment to a host cell, probably changes its conformation to trigger the signal for tail contraction. Involved in the tail assembly. The polypeptide is Baseplate protein gp9 (9) (Enterobacteria phage T4 (Bacteriophage T4)).